The primary structure comprises 316 residues: 4-hydroxy-3-methylbut-2-enyl diphosphate reductase (316 aa).

Cysteine 12 contacts [4Fe-4S] cluster. (2E)-4-hydroxy-3-methylbut-2-enyl diphosphate contacts are provided by histidine 41 and histidine 74. Dimethylallyl diphosphate contacts are provided by histidine 41 and histidine 74. Isopentenyl diphosphate-binding residues include histidine 41 and histidine 74. Cysteine 96 serves as a coordination point for [4Fe-4S] cluster. Histidine 124 is a (2E)-4-hydroxy-3-methylbut-2-enyl diphosphate binding site. Histidine 124 provides a ligand contact to dimethylallyl diphosphate. Histidine 124 contacts isopentenyl diphosphate. Residue glutamate 126 is the Proton donor of the active site. Position 167 (threonine 167) interacts with (2E)-4-hydroxy-3-methylbut-2-enyl diphosphate. Cysteine 197 provides a ligand contact to [4Fe-4S] cluster. 4 residues coordinate (2E)-4-hydroxy-3-methylbut-2-enyl diphosphate: serine 225, serine 226, asparagine 227, and serine 269. The dimethylallyl diphosphate site is built by serine 225, serine 226, asparagine 227, and serine 269. Positions 225, 226, 227, and 269 each coordinate isopentenyl diphosphate.

This sequence belongs to the IspH family. Homodimer. [4Fe-4S] cluster serves as cofactor.

The catalysed reaction is isopentenyl diphosphate + 2 oxidized [2Fe-2S]-[ferredoxin] + H2O = (2E)-4-hydroxy-3-methylbut-2-enyl diphosphate + 2 reduced [2Fe-2S]-[ferredoxin] + 2 H(+). It catalyses the reaction dimethylallyl diphosphate + 2 oxidized [2Fe-2S]-[ferredoxin] + H2O = (2E)-4-hydroxy-3-methylbut-2-enyl diphosphate + 2 reduced [2Fe-2S]-[ferredoxin] + 2 H(+). The protein operates within isoprenoid biosynthesis; dimethylallyl diphosphate biosynthesis; dimethylallyl diphosphate from (2E)-4-hydroxy-3-methylbutenyl diphosphate: step 1/1. It functions in the pathway isoprenoid biosynthesis; isopentenyl diphosphate biosynthesis via DXP pathway; isopentenyl diphosphate from 1-deoxy-D-xylulose 5-phosphate: step 6/6. Its function is as follows. Catalyzes the conversion of 1-hydroxy-2-methyl-2-(E)-butenyl 4-diphosphate (HMBPP) into a mixture of isopentenyl diphosphate (IPP) and dimethylallyl diphosphate (DMAPP). Acts in the terminal step of the DOXP/MEP pathway for isoprenoid precursor biosynthesis. This Shigella flexneri serotype 5b (strain 8401) protein is 4-hydroxy-3-methylbut-2-enyl diphosphate reductase.